A 307-amino-acid polypeptide reads, in one-letter code: sn-1-specific diacylglycerol lipase ABHD11 (307 aa).

The transit peptide at 1-34 directs the protein to the mitochondrion; the sequence is MLRWARAWRVPRGVLGASSPRRLAVPVTFCSSRS. Lys79 carries the N6-succinyllysine modification. Catalysis depends on Ser133, which acts as the Charge relay system. The residue at position 196 (Lys196) is an N6-succinyllysine. Catalysis depends on charge relay system residues Asp229 and His288.

This sequence belongs to the AB hydrolase superfamily. In terms of assembly, interacts with OGDH and DLST; this interaction maintains the functional lipoylation of the 2-oxoglutarate dehydrogenase complex. Phosphorylated. Expressed in white adipose tissues.

Its subcellular location is the mitochondrion. The protein resides in the mitochondrion matrix. The catalysed reaction is 1-octadecanoyl-2-(5Z,8Z,11Z,14Z-eicosatetraenoyl)-sn-glycerol + H2O = 2-(5Z,8Z,11Z,14Z-eicosatetraenoyl)-glycerol + octadecanoate + H(+). It catalyses the reaction a 1,2-diacyl-sn-glycerol + H2O = a 2-acylglycerol + a fatty acid + H(+). It carries out the reaction a 1,3-diacyl-sn-glycerol + H2O = a 1-acyl-sn-glycerol + a fatty acid + H(+). The enzyme catalyses 1-octadecanoyl-2-(9Z-octadecenoyl)-sn-glycerol + H2O = 2-(9Z-octadecenoyl)-glycerol + octadecanoate + H(+). The catalysed reaction is 1-octadecanoyl-2-(4Z,7Z,10Z,13Z,16Z,19Z-docosahexaenoyl)-sn-glycerol + H2O = 2-(4Z,7Z,10Z,13Z,16Z,19Z-docosahexaenoyl)-glycerol + octadecanoate + H(+). It catalyses the reaction 1,2-didecanoylglycerol + H2O = decanoylglycerol + decanoate + H(+). Functionally, catalyzes the hydrolysis of diacylglycerol in vitro and may function as a key regulator in lipid metabolism, namely by regulating the intracellular levels of diacylglycerol. 1,2-diacyl-sn-glycerols are the preferred substrate over 1,3-diacyl-sn-glycerols. The enzyme hydrolyzes stearate in preference to palmitate from the sn-1 position of 1,2-diacyl-sn-glycerols. Maintains the functional lipoylation of the 2-oxoglutarate dehydrogenase complex (OGDHc) through its interaction with the OGDHc by preventing the formation of lipoyl adducts. In addition, is also required for the expansion and differentiation of embryonic stem cells (ESCs). This is sn-1-specific diacylglycerol lipase ABHD11 from Mus musculus (Mouse).